The following is a 254-amino-acid chain: rRNA N-glycosylase sapovaccarin-S1 (254 aa).

Belongs to the ribosome-inactivating protein family. Type 1 RIP subfamily. As to expression, expressed in seeds; most abundant in the perisperm.

It catalyses the reaction Endohydrolysis of the N-glycosidic bond at one specific adenosine on the 28S rRNA.. Its function is as follows. Exhibits N-glycosylase activity. Catalyzes the release of one adenine from a ribosome. Acts as a ribosome-inactivating protein and inhibits protein synthesis in a rabbit-reticulocyte lysate system and in various cell lines (in vitro). Induces cell death in Huh-7 liver cells. May contribute to the protection against plant pests and predators or play a role in regulating the death of plant cells. This chain is rRNA N-glycosylase sapovaccarin-S1, found in Gypsophila vaccaria (Cow soapwort).